Here is a 166-residue protein sequence, read N- to C-terminus: Twist-related protein (166 aa).

Positions 1–18 (MMQEESSSPVSPVDSLSN) are enriched in low complexity. The tract at residues 1–83 (MMQEESSSPV…RVMANVRERQ (83 aa)) is disordered. Basic residues predominate over residues 28 to 39 (SKRGCRKRRSAR). The span at 57 to 75 (ASSTGSSPQSFEELQSQRV) shows a compositional bias: polar residues. Residues 72 to 123 (SQRVMANVRERQRTQSLNEAFSSLRKIIPTLPSDKLSKIQTLKLASRYIDFL) enclose the bHLH domain.

As to quaternary structure, efficient DNA binding requires dimerization with another bHLH protein. Homodimer. In terms of tissue distribution, subset of mesodermal cells.

Its subcellular location is the nucleus. Probable transcription factor, which may be involved, with other proteins, in establishing the pattern of cell type-specific gene expression in mesodermal cell subgroups. The polypeptide is Twist-related protein (twist1) (Xenopus laevis (African clawed frog)).